A 526-amino-acid chain; its full sequence is Catalase (526 aa).

Basic and acidic residues predominate over residues 1-22 (MADDREKSTDQMKLWKEGRGSQ). Residues 1–29 (MADDREKSTDQMKLWKEGRGSQRPDVLTT) form a disordered region. Catalysis depends on residues H75 and N148. NADP(+) is bound by residues H194, S201, R203, N213, K237, W303, H305, and K306. Y358 serves as a coordination point for heme.

This sequence belongs to the catalase family. Homotetramer. It depends on heme as a cofactor. Requires NADP(+) as cofactor.

The protein resides in the peroxisome matrix. The catalysed reaction is 2 H2O2 = O2 + 2 H2O. Catalyzes the degradation of hydrogen peroxide (H(2)O(2)) generated by peroxisomal oxidases to water and oxygen, thereby protecting cells from the toxic effects of hydrogen peroxide. The chain is Catalase (cat) from Danio rerio (Zebrafish).